Consider the following 976-residue polypeptide: MEEFENFFSQLIPAPDQDIWLLAAQQTPQNNDGVSTSGIPIGWSLQNLAASTNNIAAIDSNPQIREQLQQLQQQQQQQQTQIQQQLQSYQQQQQQHYQQRQQQYQQQYQQPYTTPSPPDQIDYNQQLSPQQQQQQQQQQQQQQQQQQQQPQLQQQNNTISQQQQQQNLNFQVQFLQQQQQHQQQLQQQQEQFQHQQLQHQQQQYFIKQQLQQQQQQQQQQQQQQQQQQQQQQQQQQQQQQQQQQQNQHLSPILSPLPPIQQLQQYQQQQQQQQQQQQQQQQQQQQQQPQQQSINIGSSNTPLQHQAMLQAQSLMDSINTKQPPIPPTLQSPTQHQFLNTPVLDQHILSSIRPSYSQVTKANISTLPTEITNSLTNFNGTNNSTPNFEDLTGGKLSSNNIKNTATPLSSPPSTKNGKQKQPKNNNNNNNSSNNNNNNNQTTTQQKQSKNNNSYGNNSNNNNNNNNFNNNKLKKQNDSTTTPTITSPNMTSPIDSNGDFDLLDEDEKKKSISRINQNLASRNYRQRRKEYIKEIESKMAALTFENHQLKKENESLKETGGVEVMRPEPELITMVVEGKQIIIQLSQALKKNDDRSLIYLLHLYHCAIAKRYSIVEREVEKIVHPYTQSKLAAMGYIPKSDKMFLNCIAGPAADSWFQLFKNEAEITLEQSNKLEALRTQHGKIDSALLQERQELDLDIKKFYYTKILVLPNNPLIIGDIPAQPYNGELSQSPISNSPLEISQLLDFAGKLESLKKNFILHRNLMLDTLASLSSILTPRQEAMLLVRVHFYTSYDFSHMELLKDVWTNIVSSKSITGPLNISEALKKLSDTTNTHHSIENIVKPPQFHQYTPKQLKFENQSNNFGNNNGSKSKNIENNLNNSVNNNNNNNNNNNNNNNNNNNNNNNNNNNNNNNNNSNSNNNNNVNSNSSNVNSNNNNFNNAPQMVLNPPSADAIPYPSTTQLDKRFQWVSYPSAPPPN.

Coiled coils occupy residues 57–110 (AIDS…QYQQ) and 136–287 (QQQQ…QQQQ). Positions 104 to 128 (YQQQYQQPYTTPSPPDQIDYNQQLS) are disordered. 2 stretches are compositionally biased toward polar residues: residues 374–385 (TNFNGTNNSTPN) and 393–411 (KLSS…SPPS). The interval 374 to 499 (TNFNGTNNST…PIDSNGDFDL (126 aa)) is disordered. Composition is skewed to low complexity over residues 420-468 (PKNN…FNNN) and 476-490 (STTT…MTSP). Residues 504–567 (EKKKSISRIN…GVEVMRPEPE (64 aa)) form the bZIP domain. The segment at 505–507 (KKK) is basic motif. The segment at 509-516 (ISRINQNL) is leucine-zipper. Residues 855 to 938 (ENQSNNFGNN…VNSNNNNFNN (84 aa)) show a composition bias toward low complexity. The interval 855–957 (ENQSNNFGNN…SADAIPYPST (103 aa)) is disordered.

The protein belongs to the bZIP family.

Its subcellular location is the nucleus. In terms of biological role, probable transcriptional regulator. This chain is Probable basic-leucine zipper transcription factor Q (bzpQ), found in Dictyostelium discoideum (Social amoeba).